The chain runs to 443 residues: MKIGIINTKIRTVFSAFACMIAASLVCTMPARAVVEININKGVIEPLPIAITDFLSADQLGSNITSVIAADLERSGLFAPIDKGAFIEKISNPDAAPRFEDWKVINAQALVTGRITKQPDGRLKAEFHLWDTFGGQQMIGQQFFTTPDNWRRVAHIIADAIYERLTGDKGYFDTRVVFVDESGPAQKRVKRLAIMDQDGANVRFISDGRALSLTPRFSPNRQEVTYMSFEGGSPKVYLLQLETGQRELVGNFPGMTIAPRFSPDGQKVVMSLLQDDGSANIYTMDLRNRTTTRLTSSQAIDTGASYSPDGSQIVFTSDRGGRPQLYVMGADGSNPRRISMGDGSYSTPVWSPRGDLIAFTKQSQGQFSIGVTKTDGSGERLLTSGFHNEGPTWAPNGRVLMFFRKAAGAGGPKLFTIDLTGRNERQIQTPNFASDPAWSPLLE.

Positions 1–33 (MKIGIINTKIRTVFSAFACMIAASLVCTMPARA) are cleaved as a signal peptide.

The protein belongs to the TolB family. The Tol-Pal system is composed of five core proteins: the inner membrane proteins TolA, TolQ and TolR, the periplasmic protein TolB and the outer membrane protein Pal. They form a network linking the inner and outer membranes and the peptidoglycan layer.

It is found in the periplasm. Part of the Tol-Pal system, which plays a role in outer membrane invagination during cell division and is important for maintaining outer membrane integrity. This Brucella suis (strain ATCC 23445 / NCTC 10510) protein is Tol-Pal system protein TolB.